An 85-amino-acid polypeptide reads, in one-letter code: NAD(P)H-quinone oxidoreductase subunit O (85 aa).

The protein belongs to the complex I NdhO subunit family. In terms of assembly, NDH-1 can be composed of about 15 different subunits; different subcomplexes with different compositions have been identified which probably have different functions.

It is found in the cellular thylakoid membrane. It catalyses the reaction a plastoquinone + NADH + (n+1) H(+)(in) = a plastoquinol + NAD(+) + n H(+)(out). The catalysed reaction is a plastoquinone + NADPH + (n+1) H(+)(in) = a plastoquinol + NADP(+) + n H(+)(out). Its function is as follows. NDH-1 shuttles electrons from an unknown electron donor, via FMN and iron-sulfur (Fe-S) centers, to quinones in the respiratory and/or the photosynthetic chain. The immediate electron acceptor for the enzyme in this species is believed to be plastoquinone. Couples the redox reaction to proton translocation, and thus conserves the redox energy in a proton gradient. Cyanobacterial NDH-1 also plays a role in inorganic carbon-concentration. The protein is NAD(P)H-quinone oxidoreductase subunit O of Synechococcus sp. (strain WH7803).